We begin with the raw amino-acid sequence, 227 residues long: Probable FKBP-type 25 kDa peptidyl-prolyl cis-trans isomerase (227 aa).

Residues 144–227 (ATQVHVRYRG…VFEIDLLGFR (84 aa)) form the PPIase FKBP-type domain.

The protein belongs to the FKBP-type PPIase family.

The enzyme catalyses [protein]-peptidylproline (omega=180) = [protein]-peptidylproline (omega=0). Functionally, PPIases accelerate the folding of proteins. In Pseudomonas aeruginosa (strain ATCC 15692 / DSM 22644 / CIP 104116 / JCM 14847 / LMG 12228 / 1C / PRS 101 / PAO1), this protein is Probable FKBP-type 25 kDa peptidyl-prolyl cis-trans isomerase (fkl).